Reading from the N-terminus, the 108-residue chain is uncharacterized protein (108 aa).

Gly2 carries the N-myristoyl glycine; by host lipid modification.

This is an uncharacterized protein from Acanthamoeba polyphaga (Amoeba).